Reading from the N-terminus, the 459-residue chain is ATP-dependent protease ATPase subunit HslU (459 aa).

Residues Val18, 60-65, Asp269, Glu337, and Arg409 contribute to the ATP site; that span reads GVGKTE.

The protein belongs to the ClpX chaperone family. HslU subfamily. In terms of assembly, a double ring-shaped homohexamer of HslV is capped on each side by a ring-shaped HslU homohexamer. The assembly of the HslU/HslV complex is dependent on binding of ATP.

It localises to the cytoplasm. Its function is as follows. ATPase subunit of a proteasome-like degradation complex; this subunit has chaperone activity. The binding of ATP and its subsequent hydrolysis by HslU are essential for unfolding of protein substrates subsequently hydrolyzed by HslV. HslU recognizes the N-terminal part of its protein substrates and unfolds these before they are guided to HslV for hydrolysis. This is ATP-dependent protease ATPase subunit HslU from Myxococcus xanthus (strain DK1622).